A 138-amino-acid chain; its full sequence is ATP synthase epsilon chain (138 aa).

Basic and acidic residues predominate over residues K89–K114. Residues K89–Q117 are disordered.

This sequence belongs to the ATPase epsilon chain family. In terms of assembly, F-type ATPases have 2 components, CF(1) - the catalytic core - and CF(0) - the membrane proton channel. CF(1) has five subunits: alpha(3), beta(3), gamma(1), delta(1), epsilon(1). CF(0) has three main subunits: a, b and c.

Its subcellular location is the cellular thylakoid membrane. In terms of biological role, produces ATP from ADP in the presence of a proton gradient across the membrane. This is ATP synthase epsilon chain from Gloeothece citriformis (strain PCC 7424) (Cyanothece sp. (strain PCC 7424)).